A 562-amino-acid chain; its full sequence is Glutamine--tRNA ligase (562 aa).

The 'HIGH' region motif lies at 35–45; it reads PEPNGYLHIGH. ATP contacts are provided by residues 36–38 and 42–48; these read EPN and HIGHAKS. 2 residues coordinate L-glutamine: aspartate 68 and tyrosine 213. ATP-binding positions include threonine 232 and 264–265; that span reads RL. The 'KMSKS' region motif lies at 271–275; sequence ITSKR.

This sequence belongs to the class-I aminoacyl-tRNA synthetase family. Monomer.

Its subcellular location is the cytoplasm. The catalysed reaction is tRNA(Gln) + L-glutamine + ATP = L-glutaminyl-tRNA(Gln) + AMP + diphosphate. The protein is Glutamine--tRNA ligase of Neisseria gonorrhoeae (strain ATCC 700825 / FA 1090).